The primary structure comprises 182 residues: N-alpha-acetyltransferase daf-31 (182 aa).

Residues M1 to A152 enclose the N-acetyltransferase domain. Residues P162–S182 form a disordered region.

This sequence belongs to the acetyltransferase family. ARD1 subfamily. As to quaternary structure, component of the N-terminal acetyltransferase A (NatA) complex. In terms of tissue distribution, expressed in head and tail hypodermal cells, hypodermal seam cells, pharynx, intestine and head and tail neurons.

The catalysed reaction is N-terminal glycyl-[protein] + acetyl-CoA = N-terminal N(alpha)-acetylglycyl-[protein] + CoA + H(+). It catalyses the reaction N-terminal L-alanyl-[protein] + acetyl-CoA = N-terminal N(alpha)-acetyl-L-alanyl-[protein] + CoA + H(+). It carries out the reaction N-terminal L-seryl-[protein] + acetyl-CoA = N-terminal N(alpha)-acetyl-L-seryl-[protein] + CoA + H(+). The enzyme catalyses N-terminal L-valyl-[protein] + acetyl-CoA = N-terminal N(alpha)-acetyl-L-valyl-[protein] + CoA + H(+). The catalysed reaction is N-terminal L-cysteinyl-[protein] + acetyl-CoA = N-terminal N(alpha)-acetyl-L-cysteinyl-[protein] + CoA + H(+). It catalyses the reaction N-terminal L-threonyl-[protein] + acetyl-CoA = N-terminal N(alpha)-acetyl-L-threonyl-[protein] + CoA + H(+). Catalytic subunit of the N-terminal acetyltransferase A (NatA) complex which displays alpha (N-terminal) acetyltransferase activity. Plays a role in regulating larval development, metabolism and longevity. Functions downstream or alongside daf-3, daf-12 and daf-16 in the dauer formation pathway. Functions upstream of daf-15 to enable animal development. The chain is N-alpha-acetyltransferase daf-31 from Caenorhabditis elegans.